Here is a 959-residue protein sequence, read N- to C-terminus: Ribonucleoside-diphosphate reductase large subunit (959 aa).

Substrate contacts are provided by residues Thr-68, 83–84, and Gly-112; that span reads SC. A disulfide bond links Cys-84 and Cys-626. Asn-270 serves as the catalytic Proton acceptor. A DOD-type homing endonuclease domain is found at 378-508; it reads LPTLFGNSEH…IQLLLIGMGV (131 aa). Cys-611 functions as the Cysteine radical intermediate in the catalytic mechanism. The active-site Proton acceptor is the Glu-613. 751–755 lines the substrate pocket; that stretch reads PTATS.

Belongs to the ribonucleoside diphosphate reductase large chain family. Heterotetramer composed of a homodimer of the large subunit (R1) and a homodimer of the small subunit (R2). Larger multisubunit protein complex are also active, composed of (R1)n(R2)n.

The catalysed reaction is a 2'-deoxyribonucleoside 5'-diphosphate + [thioredoxin]-disulfide + H2O = a ribonucleoside 5'-diphosphate + [thioredoxin]-dithiol. Under complex allosteric control mediated by deoxynucleoside triphosphates and ATP binding. The type of nucleotide bound at the specificity site determines substrate preference. It seems probable that ATP makes the enzyme reduce CDP and UDP, dGTP favors ADP reduction and dTTP favors GDP reduction. Its function is as follows. Ribonucleoside-diphosphate reductase holoenzyme provides the precursors necessary for viral DNA synthesis. Allows virus growth in non-dividing cells. Catalyzes the biosynthesis of deoxyribonucleotides from the corresponding ribonucleotides. The chain is Ribonucleoside-diphosphate reductase large subunit from Acheta domesticus (House cricket).